The primary structure comprises 468 residues: UDP-N-acetylmuramate--L-alanine ligase (468 aa).

An ATP-binding site is contributed by G121–T127.

Belongs to the MurCDEF family.

The protein localises to the cytoplasm. The enzyme catalyses UDP-N-acetyl-alpha-D-muramate + L-alanine + ATP = UDP-N-acetyl-alpha-D-muramoyl-L-alanine + ADP + phosphate + H(+). The protein operates within cell wall biogenesis; peptidoglycan biosynthesis. Cell wall formation. The sequence is that of UDP-N-acetylmuramate--L-alanine ligase from Borreliella afzelii (strain PKo) (Borrelia afzelii).